We begin with the raw amino-acid sequence, 712 residues long: TIR domain-containing adapter molecule 1 (712 aa).

The tract at residues 1-153 is TRIF-NTD; that stretch reads MACTGPSLPS…CGWDIAGDPG (153 aa). The TRAF6-binding signature appears at 84-91; that stretch reads EDPEEPPD. The pLxIS motif signature appears at 207 to 210; the sequence is LEIS. Position 210 is a phosphoserine; by TBK1 (S210). Disordered stretches follow at residues 216–316 and 336–384; these read PFLS…SLPL and LSVE…LFPS. K229 is covalently cross-linked (Glycyl lysine isopeptide (Lys-Gly) (interchain with G-Cter in ubiquitin)). Positions 248–255 match the TRAF6-binding motif; sequence QEPEEMSW. Residues 265–275 show a composition bias toward pro residues; it reads PELPSSPPPGL. The TRAF6-binding motif lies at 299-309; that stretch reads NYPVECTEGSA. The span at 347–369 shows a compositional bias: pro residues; that stretch reads KPCPPTPTTPETSPPPPPPPPSS. A TIR domain is found at 393–553; sequence KFYNFVILHA…QDTRALREQS (161 aa). Residues 512–712 form a sufficient to induce apoptosis region; that stretch reads RLDEHSQIFA…APEDKTQEAE (201 aa). 2 stretches are compositionally biased toward pro residues: residues 620 to 633 and 640 to 649; these read PFPT…PPPL and TPPPPSPQPA. The interval 620-677 is disordered; that stretch reads PFPTWPGCPQPPPLHAWQAGTPPPPSPQPAAFPQSLPFPQSPAFPTASPAPPQSPGLQ. Positions 650-666 are enriched in low complexity; that stretch reads AFPQSLPFPQSPAFPTA.

In terms of assembly, homodimer. Found in a multi-helicase-TICAM1 complex at least composed of DHX36, DDX1, DDX21 and TICAM1; this complex exists in resting cells with or without poly(I:C) RNA ligand stimulation. Interacts (via TIR domain) with DDX21 (via C-terminus). Interacts (via TIR domain) with DHX36 (via C-terminus). Interacts with AZI2 and IRF7. Interacts with TICAM2 in TLR4 recruitment. Interaction with PIAS4 inhibits the TICAM1-induced NF-kappa-B, IRF and IFNB1 activation. Interacts with IKBKB and IKBKE. Interaction with SARM1 blocks TICAM1-dependent transcription factor activation. Interacts with TRAF3. Interacts (when phosphorylated) with IRF3; following activation and phosphorylation on the pLxIS motif by TBK1, recruits IRF3. Interacts with TBK1, TRAF6 and RIPK1 and these interactions are enhanced in the presence of WDFY1. Interacts with TRAFD1. Interacts with UBQLN1 (via UBA domain). Interacts with TLR4. Interacts with WDFY1 in response to poly(I:C). Interacts (via the TIR domain) with TLR3 in response to poly(I:C) and this interaction is enhanced in the presence of WDFY1. Interacts with TRIM56. Component of a multi-helicase-TICAM1 complex that acts as a cytoplasmic sensor of viral double-stranded RNA (dsRNA) and plays a role in the activation of a cascade of antiviral responses including the induction of pro-inflammatory cytokines. Interacts (via the TIR domain) with TLR5. Interacts with TRIM8. Interacts with TAX1BP1 and TRIM32; these interactions target TICAM1 to TAX1BP1-mediated selective autophagic degradation. Interacts with DDX50. (Microbial infection) Interacts with hepatitis C virus (HCV) NS3/4A protease; this interaction leads to TICAM1 cleavage, thereby disrupting TLR3 signaling and preventing the establishment of an antiviral state. As to quaternary structure, (Microbial infection) Interacts with Seneca Valley virus protease 3C; this interaction allows the cleavage of TICAM1/TRIF and subsequent suppression of host innate immunity. In terms of assembly, (Microbial infection) Interacts (via C-terminus) with coxsackievirus B3 (CVB3) protease 3C. In terms of processing, phosphorylated by TBK1. Following activation, phosphorylated by TBK1 at Ser-210 in the pLxIS motif. The phosphorylated pLxIS motif constitutes an IRF3-binding motif, leading to recruitment of the transcription factor IRF3 to induce type-I interferons and other cytokines. Polyubiquitinated at Lys-229 by TRIM38 with 'Lys-48'-linked chains, leading to proteasomal degradation. Polyubiquitinated with 'Lys-6'- and 'Lys-33'-linked chains in a TRIM8-dependent manner; ubiquitination disrupts the interaction with TBK1 and subsequent interferon production. Post-translationally, (Microbial infection) Cleaved and degraded by hepatitis A virus (HAV) protein 3CD allowing the virus to disrupt host TLR3 signaling. In terms of processing, (Microbial infection) Cleaved by CVB3 protease 3C allowing the virus to disrupt host TLR3 signaling. (Microbial infection) Cleaved by Seneca Valley virus protease 3C allowing the virus to disrupt host TLR3 signaling. Post-translationally, (Microbial infection) Cleaved by protease 3C of human enterovirus D68 (EV68) allowing the virus to disrupt host TLR3 signaling. In terms of processing, (Microbial infection) Cleaved by HCV protease NS3/4A, thereby disrupting TLR3 signaling and preventing the establishment of an antiviral state. Ubiquitously expressed but with higher levels in liver.

The protein resides in the cytoplasmic vesicle. The protein localises to the autophagosome. It is found in the cytoplasm. It localises to the cytosol. Its subcellular location is the mitochondrion. Its function is as follows. Involved in innate immunity against invading pathogens. Adapter used by TLR3, TLR4 (through TICAM2) and TLR5 to mediate NF-kappa-B and interferon-regulatory factor (IRF) activation, and to induce apoptosis. Ligand binding to these receptors results in TRIF recruitment through its TIR domain. Distinct protein-interaction motifs allow recruitment of the effector proteins TBK1, TRAF6 and RIPK1, which in turn, lead to the activation of transcription factors IRF3 and IRF7, NF-kappa-B and FADD respectively. Phosphorylation by TBK1 on the pLxIS motif leads to recruitment and subsequent activation of the transcription factor IRF3 to induce expression of type I interferon and exert a potent immunity against invading pathogens. Component of a multi-helicase-TICAM1 complex that acts as a cytoplasmic sensor of viral double-stranded RNA (dsRNA) and plays a role in the activation of a cascade of antiviral responses including the induction of pro-inflammatory cytokines. The sequence is that of TIR domain-containing adapter molecule 1 (TICAM1) from Homo sapiens (Human).